Here is a 379-residue protein sequence, read N- to C-terminus: UDP-N-acetylglucosamine--N-acetylmuramyl-(pentapeptide) pyrophosphoryl-undecaprenol N-acetylglucosamine transferase (379 aa).

UDP-N-acetyl-alpha-D-glucosamine is bound by residues 17–19, Asn128, Arg169, Ser197, and Gln298; that span reads TGG.

It belongs to the glycosyltransferase 28 family. MurG subfamily.

It is found in the cell inner membrane. The enzyme catalyses di-trans,octa-cis-undecaprenyl diphospho-N-acetyl-alpha-D-muramoyl-L-alanyl-D-glutamyl-meso-2,6-diaminopimeloyl-D-alanyl-D-alanine + UDP-N-acetyl-alpha-D-glucosamine = di-trans,octa-cis-undecaprenyl diphospho-[N-acetyl-alpha-D-glucosaminyl-(1-&gt;4)]-N-acetyl-alpha-D-muramoyl-L-alanyl-D-glutamyl-meso-2,6-diaminopimeloyl-D-alanyl-D-alanine + UDP + H(+). It functions in the pathway cell wall biogenesis; peptidoglycan biosynthesis. In terms of biological role, cell wall formation. Catalyzes the transfer of a GlcNAc subunit on undecaprenyl-pyrophosphoryl-MurNAc-pentapeptide (lipid intermediate I) to form undecaprenyl-pyrophosphoryl-MurNAc-(pentapeptide)GlcNAc (lipid intermediate II). The protein is UDP-N-acetylglucosamine--N-acetylmuramyl-(pentapeptide) pyrophosphoryl-undecaprenol N-acetylglucosamine transferase of Brucella abortus (strain S19).